A 248-amino-acid polypeptide reads, in one-letter code: MKAQVKTIEGGVAKDIELPAMFSEEYRPDLIRKAVLALQSTRRQPHGSYPYAGICSSAVGWGSGRGASHVPRLKNGSRAAKVPQAKGGREAHPPVTAKVLIKEINAKEKQKAFRSAVAASIRADLISSRGHRFEGTVPLIFEDKFENLAKTQEVISALTNIGVYSDIERSKESRKVRAGRGKLRGRRYKQRKSLLIVTSGPEFRAARNLAGVDVVTVDQLNVEHLAPGMQAGRLTVWTESAVIRLEGR.

Residues 69-92 (HVPRLKNGSRAAKVPQAKGGREAH) form a disordered region.

It belongs to the universal ribosomal protein uL4 family. In terms of assembly, part of the 50S ribosomal subunit.

Its function is as follows. One of the primary rRNA binding proteins, this protein initially binds near the 5'-end of the 23S rRNA. It is important during the early stages of 50S assembly. It makes multiple contacts with different domains of the 23S rRNA in the assembled 50S subunit and ribosome. In terms of biological role, forms part of the polypeptide exit tunnel. This Methanoregula boonei (strain DSM 21154 / JCM 14090 / 6A8) protein is Large ribosomal subunit protein uL4.